We begin with the raw amino-acid sequence, 160 residues long: Nucleotide-binding protein PSHAa2277 (160 aa).

This sequence belongs to the YajQ family.

Nucleotide-binding protein. In Pseudoalteromonas translucida (strain TAC 125), this protein is Nucleotide-binding protein PSHAa2277.